A 159-amino-acid polypeptide reads, in one-letter code: Nudix hydrolase DR_1025 (159 aa).

Positions 1, 14, and 49 each coordinate Mg(2+). 1–6 (MEHDER) is a binding site for ATP. The 134-residue stretch at 11-144 (VELRAAGVVL…QIRMYQTKLF (134 aa)) folds into the Nudix hydrolase domain. Position 50–51 (50–51 (GA)) interacts with ATP. Residues 50 to 71 (GAVEDGENPQDAAVREACEETG) carry the Nudix box motif. Mg(2+) is bound by residues Glu-53 and Glu-65. 87–89 (FPD) serves as a coordination point for ATP. Arg-95 contacts Mg(2+).

It belongs to the Nudix hydrolase family. As to quaternary structure, homodimer. It depends on Mg(2+) as a cofactor.

The catalysed reaction is 8-oxo-dGTP + H2O = 8-oxo-dGDP + phosphate + H(+). The enzyme catalyses 8-oxo-GTP + H2O = 8-oxo-GDP + phosphate + H(+). It carries out the reaction P(1),P(4)-bis(5'-adenosyl) tetraphosphate + H2O = AMP + ATP + 2 H(+). Hydrolase that can act as a nucleoside triphosphatase and a dinucleoside polyphosphate pyrophosphatase. The best substrates are 8-oxo-dGTP and 8-oxo-GTP. Other substrates include Ap4A, dGTP and GTP. May be involved in protection from damage caused by radiation. This is Nudix hydrolase DR_1025 from Deinococcus radiodurans (strain ATCC 13939 / DSM 20539 / JCM 16871 / CCUG 27074 / LMG 4051 / NBRC 15346 / NCIMB 9279 / VKM B-1422 / R1).